The sequence spans 463 residues: L-seryl-tRNA(Sec) selenium transferase (463 aa).

Residue lysine 295 is modified to N6-(pyridoxal phosphate)lysine.

It belongs to the SelA family. Homodecamer; pentamer of dimers. Binds only one seryl-tRNA(Sec) per dimer. It depends on pyridoxal 5'-phosphate as a cofactor.

It localises to the cytoplasm. The catalysed reaction is L-seryl-tRNA(Sec) + selenophosphate + H(+) = L-selenocysteinyl-tRNA(Sec) + phosphate. It participates in aminoacyl-tRNA biosynthesis; selenocysteinyl-tRNA(Sec) biosynthesis; selenocysteinyl-tRNA(Sec) from L-seryl-tRNA(Sec) (bacterial route): step 1/1. Converts seryl-tRNA(Sec) to selenocysteinyl-tRNA(Sec) required for selenoprotein biosynthesis. The protein is L-seryl-tRNA(Sec) selenium transferase of Escherichia coli O45:K1 (strain S88 / ExPEC).